The following is a 357-amino-acid chain: Isopentenyl-diphosphate delta-isomerase (357 aa).

6 to 7 (RK) is a binding site for substrate. Residues serine 62, 63 to 65 (AMT), serine 93, and asparagine 122 contribute to the FMN site. 93–95 (SQR) provides a ligand contact to substrate. Substrate is bound at residue glutamine 156. Residue glutamate 157 participates in Mg(2+) binding. Residues lysine 186, threonine 216, 267 to 269 (GVR), and 288 to 289 (AL) contribute to the FMN site.

Belongs to the IPP isomerase type 2 family. In terms of assembly, homooctamer. Dimer of tetramers. FMN is required as a cofactor. It depends on NADPH as a cofactor. The cofactor is Mg(2+).

Its subcellular location is the cytoplasm. The catalysed reaction is isopentenyl diphosphate = dimethylallyl diphosphate. In terms of biological role, involved in the biosynthesis of isoprenoids. Catalyzes the 1,3-allylic rearrangement of the homoallylic substrate isopentenyl (IPP) to its allylic isomer, dimethylallyl diphosphate (DMAPP). In Methanothrix thermoacetophila (strain DSM 6194 / JCM 14653 / NBRC 101360 / PT) (Methanosaeta thermophila), this protein is Isopentenyl-diphosphate delta-isomerase.